We begin with the raw amino-acid sequence, 457 residues long: Paired box protein Pax-8 (457 aa).

Positions 9-135 (GHGGLNQLGG…SSINRIIRTK (127 aa)) form a DNA-binding region, paired. The interval 12 to 68 (GLNQLGGAFVNGRPLPEVVRQRIVDLAHQGVRPCDISRQLRVSHGCVSKILGRYYET) is PAI subdomain. The RED subdomain stretch occupies residues 87–135 (KVVEKIGDYKRQNPTMFAWEIRDRLLAEGVCDNDTVPSVSSINRIIRTK). A compositionally biased stretch (polar residues) spans 159 to 182 (LIPSSAVTPPESPQSDSLGSTYSI). Residues 159–224 (LIPSSAVTPP…SSSSGPRKHL (66 aa)) form a disordered region. Ser304 carries the post-translational modification Phosphoserine.

In terms of assembly, interacts with WWTR1. As to expression, expressed in the developing excretory system and the thyroid gland.

The protein localises to the nucleus. Functionally, thought to encode a transcription factor. It may have a role in kidney cell differentiation. May play a regulatory role in mammalian development. The protein is Paired box protein Pax-8 (Pax8) of Mus musculus (Mouse).